Reading from the N-terminus, the 466-residue chain is MGDLTLRCMNCRSLLDIDSSLVDLSMAQRDLLLNSETNTDNSDNNKHNGENDRNIIPQEKLKIINQVKSPSQLRIGQAKNVTAESYVFLTDTEFSLTKFKNNGDEFVDDEDYDERNKTLSSRISALSNIFNILSCKSNIDYPVCQGCCDTLLEKLKEEYNQELKKRDTYHEFMKRIQEQNNSVEIYSDGNKGPKELKNLKREKEELLRQLQELEGENDLLQNDIQTLQSQLKEKQEQQLEQLREKNVQQMEHLSFIKDIQSLKNQRVVTLNHIDSLRKLNIYNETFRISHKGPFGTINELRLGSVPKIQVPWTEINAALGQVVLLLSLIVEKTSLPLPDYNLKPMGSTSVIEKRDLQTDQWFVLKAYGGSEFSLSSLFHKENPIDKALLAILEIIKKLSENVSSNTSEPASIELPYDISDDKINGLSILLKSSSPSLEWTTACKFLLTNIKWLLAFSTSRINKAKP.

Residues 35–55 (SETNTDNSDNNKHNGENDRNI) are disordered. Basic and acidic residues predominate over residues 43–53 (DNNKHNGENDR). Residues 149 to 258 (DTLLEKLKEE…QMEHLSFIKD (110 aa)) are a coiled coil. The segment at 279-463 (LNIYNETFRI…LAFSTSRINK (185 aa)) is BARA. Residues 439 to 464 (WTTACKFLLTNIKWLLAFSTSRINKA) are required for membrane-association, autophagic function during starvation and normal autophagosome morphology.

This sequence belongs to the beclin family. In terms of assembly, component of the autophagy-specific VPS34 PI3-kinase complex I; and of the VPS34 PI3-kinase complex II.

Its subcellular location is the endosome membrane. It is found in the vacuole membrane. The protein resides in the preautophagosomal structure membrane. In terms of biological role, required for cytoplasm to vacuole transport (Cvt), autophagy, nucleophagy, and mitophagy, as a part of the autophagy-specific VPS34 PI3-kinase complex I. This complex is essential to recruit the ATG8-phosphatidylinositol conjugate and the ATG12-ATG5 conjugate to the pre-autophagosomal structure. Also involved in endosome-to-Golgi retrograde transport as part of the VPS34 PI3-kinase complex II. In Kluyveromyces marxianus (strain DMKU3-1042 / BCC 29191 / NBRC 104275) (Yeast), this protein is Vacuolar protein sorting-associated protein 30.